The primary structure comprises 2359 residues: Neuron navigator 3 (2359 aa).

The Calponin-homology (CH) domain maps to 77-184 (IEDSKIYTDW…LFFSLSRYKQ (108 aa)). Polar residues-rich tracts occupy residues 204-226 (THTA…SSLT), 233-243 (SKHSGIATSQK), 257-279 (ASSS…FNSI), and 300-317 (QPSS…TSGQ). Disordered regions lie at residues 204–623 (THTA…QQQH) and 641–660 (ENEG…TKMD). The span at 318-329 (PPASAIPSPSAS) shows a compositional bias: low complexity. Positions 335 to 352 (KSMNVKHSATSTMLTVKQ) are enriched in polar residues. 2 stretches are compositionally biased toward low complexity: residues 353-363 (PSPATSPTPSS) and 427-439 (NSGL…TNSS). Residues 465–491 (PKEKEEKTRDKNKACAEKSGKEEKDQV) show a composition bias toward basic and acidic residues. Low complexity predominate over residues 522–536 (IPSSSGIPKPGSKVP). Polar residues predominate over residues 592 to 623 (ASPSSSCVMQVTHSSGQSPGNGAVQLPQQQQH). A coiled-coil region spans residues 680-708 (EARRMRTVKNIADLRQNLEETMSSLRGTQ). Disordered stretches follow at residues 878–1315 (ADSW…SPLF), 1413–1472 (LSES…AMSS), 1653–1758 (GALN…KPSQ), and 1829–1855 (ETGN…SRQS). Composition is skewed to low complexity over residues 883-896 (DSSS…DTLD) and 904-916 (NTTS…SNIT). Residues 917–926 (VPSRKNTQLK) are compositionally biased toward polar residues. A compositionally biased stretch (basic and acidic residues) spans 943-960 (EELKKAEGDCDSHGDGAA). Polar residues-rich tracts occupy residues 978–989 (QKASLSVSQTGS) and 997–1013 (QGGT…TSAL). The span at 1017–1029 (GKTDDAKASEKGK) shows a compositional bias: basic and acidic residues. Composition is skewed to low complexity over residues 1077 to 1095 (GAST…GSAT) and 1160 to 1173 (SSTS…SSKS). Positions 1190–1199 (GRSSPVTVNQ) are enriched in polar residues. Composition is skewed to low complexity over residues 1209–1229 (VSDS…TSAS), 1256–1266 (GAKAGGKSASA), and 1274–1285 (SSSVVLSPSTSL). Gly residues predominate over residues 1299-1308 (GSMGSAGGLS). A compositionally biased stretch (basic and acidic residues) spans 1439–1448 (NQEEGKEWLR). The span at 1449-1461 (SHSTGGLQDTGNQ) shows a compositional bias: polar residues. Residues S1462 and S1466 each carry the phosphoserine modification. Over residues 1462 to 1472 (SPLVSPSAMSS) the composition is skewed to low complexity. Residues 1565–1656 (AEEKAHSEQI…AQAAIQGALN (92 aa)) are a coiled coil. 2 stretches are compositionally biased toward low complexity: residues 1675-1692 (SVSS…GSGN) and 1749-1758 (SGSSSMKPSQ). Residues 1768 to 1835 (EAEAEIILQL…LKAETGNTAK (68 aa)) are a coiled coil. A compositionally biased stretch (low complexity) spans 1841 to 1855 (SDSSSTASSSSSRQS).

This sequence belongs to the Nav/unc-53 family. Present in neurons from central and peripheral nervous systems (at protein level). Highly expressed in brain cortex, midbrain, cerebellum and hippocampus.

The protein resides in the nucleus outer membrane. Its function is as follows. Plays a role in cell migration. May be involved in neuron regeneration. May regulate IL2 production by T-cells. The sequence is that of Neuron navigator 3 (Nav3) from Mus musculus (Mouse).